A 586-amino-acid polypeptide reads, in one-letter code: MKSFATTVLLVTPGIYAAALSGRQGQAINSSCKVIPGDTAWPSRQIWSQLNDTLDGRLIQSTPQAAVCRPGGYGSISENGTECTTLKEDWDYAKAFLDSAVEIMNPWYQNTSCSPFYRVDQPCTLGNYVSYAIPVSGPEDVVTAINFTQTHNVRLVIKNTGHDYLGKSTGTGGLSLWTHNLQSKQIVNYTSPAYSGPAIKVGAGVTGGEALLHASQFGYRLVSGDCSTVGYAGGYSSGGGHSLLNSVHGMAADNVLEWEVVTADGRHLVASATQNSDLYWALSGGGAGNLAVVLSMTAKVHPDGLVGAATLSFNATSSPSNTSYISAINAWWTFLPTLIDAGASPSFNIYTNNFLIYNTTAPGKSAQDMSTLYAPYLSTLSSLSIPYTFQTYTAPSFLQHYNATDGPLPYGPYVASQLFNSRMIPRSLSSSPSNLTTAILSSVATDAPGIWQLGCLGINVNSTRISHPDNAVAPHWRTAMAVCLEFSLYDWAIPEEEMVARRQHLADVIHPAIVKVTPGSGAYLNEADPLVYPVGEDGWKDAFYGANYERLRGLKREWDPERVFYAYTAPGSEEWVSDAEGRLCRV.

The first 17 residues, 1–17 (MKSFATTVLLVTPGIYA), serve as a signal peptide directing secretion. N-linked (GlcNAc...) asparagine glycosylation is found at N29, N51, N79, N110, N146, N188, N314, N321, N358, N402, N434, and N461. Residues 124–303 (TLGNYVSYAI…LSMTAKVHPD (180 aa)) form the FAD-binding PCMH-type domain.

The protein belongs to the oxygen-dependent FAD-linked oxidoreductase family.

The enzyme catalyses betaenone C = betaenone A. The protein operates within mycotoxin biosynthesis. Its function is as follows. FAD-linked oxidoreductase; part of the gene cluster that mediates the biosynthesis of betaenones, phytotoxic polyketides involved in leaf spot disease in sugar beets. The first step of the pathway is the synthesis of dehydroprobetaenone I by the polyketide synthase bet1 and the enoyl reductase bet3 via condensation of one acetyl-CoA starter unit with 7 malonyl-CoA units and 5 methylations. The C-terminal reductase (R) domain of bet1 catalyzes the reductive release of the polyketide chain. Because bet1 lacks a designated enoylreductase (ER) domain, the required activity is provided the enoyl reductase bet3. The short-chain dehydrogenase/reductase bet4 then catalyzes reduction of dehydroprobetaenone I to probetaenone I. The cytochrome P450 monooxygenase bet2 catalyzes successive epoxidation, oxidation (resulting from epoxide opening) and hydroxylation to install a tertiary alcohol in the decaline ring to yield betaenone C from dehydroprobetaenone I and betaenone B from probetaenone I. The FAD-linked oxidoreductase (orf1) is probably responsible for the conversion of betaenone C to betaenone A via an intramolecular aldol reaction between C-1 and C-17 to form the bridged tricyclic system in betaenone A. This Neocamarosporium betae (Beet black rot fungus) protein is FAD-linked oxidoreductase orf1.